Reading from the N-terminus, the 95-residue chain is Aspartyl/glutamyl-tRNA(Asn/Gln) amidotransferase subunit C (95 aa).

This sequence belongs to the GatC family. As to quaternary structure, heterotrimer of A, B and C subunits.

It carries out the reaction L-glutamyl-tRNA(Gln) + L-glutamine + ATP + H2O = L-glutaminyl-tRNA(Gln) + L-glutamate + ADP + phosphate + H(+). The enzyme catalyses L-aspartyl-tRNA(Asn) + L-glutamine + ATP + H2O = L-asparaginyl-tRNA(Asn) + L-glutamate + ADP + phosphate + 2 H(+). Functionally, allows the formation of correctly charged Asn-tRNA(Asn) or Gln-tRNA(Gln) through the transamidation of misacylated Asp-tRNA(Asn) or Glu-tRNA(Gln) in organisms which lack either or both of asparaginyl-tRNA or glutaminyl-tRNA synthetases. The reaction takes place in the presence of glutamine and ATP through an activated phospho-Asp-tRNA(Asn) or phospho-Glu-tRNA(Gln). This Pseudomonas paraeruginosa (strain DSM 24068 / PA7) (Pseudomonas aeruginosa (strain PA7)) protein is Aspartyl/glutamyl-tRNA(Asn/Gln) amidotransferase subunit C.